The sequence spans 281 residues: GPN-loop GTPase 3 (281 aa).

13 to 18 is a GTP binding site; that stretch reads GSGKST. Positions 70 to 72 match the Gly-Pro-Asn (GPN)-loop; involved in dimer interface motif; it reads GPN. Residue 173–176 participates in GTP binding; sequence SKMD. The disordered stretch occupies residues 259–281; the sequence is VQYGEDEEPKEPKDMDEGDFTAQ.

It belongs to the GPN-loop GTPase family. Heterodimers with GPN1 or GPN2. Binds to RNA polymerase II (RNAPII).

Small GTPase required for proper nuclear import of RNA polymerase II and III (RNAPII and RNAPIII). May act at an RNAP assembly step prior to nuclear import. The sequence is that of GPN-loop GTPase 3 from Mycosarcoma maydis (Corn smut fungus).